Here is a 255-residue protein sequence, read N- to C-terminus: Homeobox protein DLX-1 (255 aa).

Polar residues predominate over residues 1–14 (MTMTTMPESLNSPV). Disordered regions lie at residues 1–38 (MTMT…MSHG) and 95–118 (SLAQ…EGGE). Over residues 25–36 (PPNQQMSPSPMS) the composition is skewed to low complexity. Over residues 100 to 112 (RLEDPGADSEKST) the composition is skewed to basic and acidic residues. The segment at residues 128–187 (IRKPRTIYSSLQLQALNRRFQQTQYLALPERAELAASLGLTQTQVKIWFQNKRSKFKKLM) is a DNA-binding region (homeobox). The tract at residues 204 to 233 (ALSAGSPPVPPGWNPNSSSGKGSGSSAGSY) is disordered. A compositionally biased stretch (low complexity) spans 217-232 (NPNSSSGKGSGSSAGS).

Belongs to the distal-less homeobox family. As to quaternary structure, interacts with SMAD4 (via homeobox DNA-binding domain). Interacts (via homeobox DNA-binding domain) with POU4F2; this interaction suppresses DLX1-mediated transcriptional activity in postnatal retina and enhances retinal ganglion cell (RGC) differentiation. In terms of tissue distribution, expressed in a restricted region of the developing brain, within the diencephalon and the adjacent telencephalic regions.

It localises to the nucleus. Functionally, plays a role as a transcriptional activator or repressor. Inhibits several cytokine signaling pathways, such as TGFB1, activin-A/INHBA and BMP4 by interfering with the transcriptional stimulatory activity of transcription factors, such as MSX2, FAST2, SMAD2 and SMAD3 during hematopoietic cell differentiation. Plays a role in terminal differentiation of interneurons, such as amacrine and bipolar cells in the developing retina. Likely to play a regulatory role in the development of the ventral forebrain. May play a role in craniofacial patterning and morphogenesis and may be involved in the early development of diencephalic subdivisions. This Mus musculus (Mouse) protein is Homeobox protein DLX-1 (Dlx1).